A 1324-amino-acid polypeptide reads, in one-letter code: MFSNKNTDNVENDNNNALGSVIARINSQNIITKNKAPVISEDFETQDFDYPSFDDETPNYDRPQPTMVENFTLLPGEFVLMITKNVVNLSLTTTTHRIGTLYQTNYQMFFIDDSTRQLVSTIANGQLLQIKKLKGHVTVKYHDNTTPNNNNNNNNNNNNNNNNTNNNNNNNINKSNNSSTDQLNSFSLEKQPSQNENLNNNNNNNNNNNNGNNNINNNNLMNSLTQPSTSSRSRLLKSNSTPINLNESSTSTNSPTLSSTTTTTTTTSSTNGNCSTNTWYSNGVSEKALILEIRCKDFMITRYCLPFNEKGNEAFELMNKLICNNYQDSNQLFSMSYSPFKGVISPIDGWLFYDPIEEYTRQGLIGNSNGSDEWRLTKMNSKYELCSTYPQHFIIPFSISDYLLNKSSSHRNKNRFPVVTWRHKQTHATLSRSSQQTGKSRCEEDELLIQAIRKSKTILPNNNNQQQQPQQQQQTLYIIDIKSTSSSPTSSSSSHCEDISHYSQCQIESECLSNIHELRESQLKLFKVIRNWNEKKGWSEIQSTGWLDQLSKLLMVTKKILTHLHLEGFSCLIHCIDGWDRTCQLSSLVQLCADPYYRTIKGFIVLISKEWLSFGHKFMTRNGQSISSTSTTTTNSSSNGQLTSSSSNTSISSNATTTTTTTTSSKQTSPVFLQFIDVVWQLTKQFPTSFEFSDSFLSVILHHLNSNLFGTFLYDSEKERQQNNLPTETQSLWTLLLSAQKNSSLLNPLFNQQLSNETSSTTNLTATTSIPLTNSTTLDQQLQFKNNNDDGVLFPNPKGVQLWSDYFLKWRNPPKASRKSNTLIAHSLGVSYVNGDLIAFQKKKRSRRSKDGASGSSSGSSGSSSKHHHHHHHHHHHHHHRKSTDEKDSKEKSSKSSRSRTSSSSKRKSLSTSSNSITQPDIKINETITTTTTTPTNTTTLTNTSTTPRNTTTLTNASTTPTTTTTTTTTTTPTKDETINESVQVNNDKLKSPSGDDIKQEQDEMNQFTSQHPNNQMESSSEINQQNEQSQLEQQQEQQQQQEQQLQHEQQQIEQQQLQKQQQQQEQQEQQELEQQEQPNETITYSMESDSQSSISQNQNQLQQQQQQQTLLDPIDESSLLATTTTTTSSTAITSASKLEKELRKQEKEKRKLEKEKKQKERAERKLEKEKKRDQKEREQKEKELLEQQKPKADITVVLQSPSKKKAMSLTMPVRGTKSRISIFSSPLVPTLHPNLSDQNSQTNSSGDNSGNVNNSPNLTSTPISNLSNNNNNNNNSNENSNNNNNNNNNNNDNTSFSKRIFKTLRGTKTFNREPTPTVGTALN.

The disordered stretch occupies residues 140 to 276; sequence KYHDNTTPNN…TSSTNGNCST (137 aa). A compositionally biased stretch (low complexity) spans 144–180; it reads NTTPNNNNNNNNNNNNNNNNTNNNNNNNINKSNNSST. Residues 181–194 are compositionally biased toward polar residues; that stretch reads DQLNSFSLEKQPSQ. Residues 195 to 222 show a composition bias toward low complexity; that stretch reads NENLNNNNNNNNNNNNGNNNINNNNLMN. A compositionally biased stretch (polar residues) spans 223 to 247; that stretch reads SLTQPSTSSRSRLLKSNSTPINLNE. A compositionally biased stretch (low complexity) spans 248-276; the sequence is SSTSTNSPTLSSTTTTTTTTSSTNGNCST. The region spanning 349–807 is the Myotubularin phosphatase domain; the sequence is GWLFYDPIEE…KGVQLWSDYF (459 aa). Substrate contacts are provided by residues 514 to 515, 575 to 581, and arginine 621; these read NI and CIDGWDR. Residue cysteine 575 is the Phosphocysteine intermediate of the active site. Disordered regions lie at residues 624–664, 841–1043, 1066–1110, 1144–1213, and 1232–1296; these read QSIS…TTTS, QKKK…QQQE, EQQE…QQQT, RKQE…LTMP, and LHPN…DNTS. 2 stretches are compositionally biased toward low complexity: residues 625–664 and 852–864; these read SISS…TTTS and GASG…SGSS. Positions 865-882 are enriched in basic residues; it reads SKHHHHHHHHHHHHHHRK. A compositionally biased stretch (basic and acidic residues) spans 883-894; the sequence is STDEKDSKEKSS. Composition is skewed to low complexity over residues 899–914 and 927–973; these read SRTS…STSS and TITT…TTTP. Residues 988-1002 are compositionally biased toward basic and acidic residues; it reads DKLKSPSGDDIKQEQ. A compositionally biased stretch (polar residues) spans 1005-1024; that stretch reads MNQFTSQHPNNQMESSSEIN. The stretch at 1020–1195 forms a coiled coil; it reads SSEINQQNEQ…LEQQKPKADI (176 aa). Positions 1025–1043 are enriched in low complexity; it reads QQNEQSQLEQQQEQQQQQE. The segment covering 1079–1090 has biased composition (polar residues); that stretch reads PNETITYSMESD. Over residues 1091–1109 the composition is skewed to low complexity; sequence SQSSISQNQNQLQQQQQQQ. The span at 1144–1193 shows a compositional bias: basic and acidic residues; the sequence is RKQEKEKRKLEKEKKQKERAERKLEKEKKRDQKEREQKEKELLEQQKPKA. A compositionally biased stretch (polar residues) spans 1234–1243; it reads PNLSDQNSQT. 2 stretches are compositionally biased toward low complexity: residues 1244–1258 and 1265–1294; these read NSSG…NSPN and SNLS…NNDN.

Belongs to the protein-tyrosine phosphatase family. Non-receptor class myotubularin subfamily.

It localises to the cytoplasm. Its function is as follows. Phosphatase that acts on lipids with a phosphoinositol headgroup. The polypeptide is Myotubularin-related protein DDB_G0290005 (Dictyostelium discoideum (Social amoeba)).